The primary structure comprises 403 residues: Propionate kinase (403 aa).

It belongs to the acetokinase family. PduW subfamily.

The protein localises to the cytoplasm. The enzyme catalyses propanoate + ATP = propanoyl phosphate + ADP. The protein operates within polyol metabolism; 1,2-propanediol degradation. Its function is as follows. Works with phosphate acetyltransferase (pta) to capture exogenous propionate and regenerate propionyl-CoA during degradation of 1,2-propanediol (1,2-PD). The polypeptide is Propionate kinase (Citrobacter rodentium (strain ICC168) (Citrobacter freundii biotype 4280)).